We begin with the raw amino-acid sequence, 38 residues long: uncharacterized protein (38 aa).

A helical membrane pass occupies residues 10–32 (FSLLWYFLVGGGKGEVCWRFLGI).

It is found in the membrane. This is an uncharacterized protein from Saccharomyces cerevisiae (strain ATCC 204508 / S288c) (Baker's yeast).